We begin with the raw amino-acid sequence, 406 residues long: Arginine decarboxylase (406 aa).

N6-(pyridoxal phosphate)lysine is present on Lys8. 192–202 (VDFGGGLGIDY) serves as a coordination point for substrate.

It belongs to the Orn/Lys/Arg decarboxylase class-II family. SpeA subfamily. The cofactor is pyridoxal 5'-phosphate. Mg(2+) is required as a cofactor.

The catalysed reaction is L-arginine + H(+) = agmatine + CO2. The protein operates within amine and polyamine biosynthesis; agmatine biosynthesis; agmatine from L-arginine: step 1/1. The chain is Arginine decarboxylase (SPE2) from Theobroma cacao (Cacao).